The following is a 427-amino-acid chain: MSVSFEAKETNRGVLTFTIGQDAIKPELDRVFNKVKKDINLPGFRKGHLPRAVFNQKFGEEALYQDVVNALLPAAYEAAVAEAGLEVVAQPKIDVVSMEKGQDWTITAEVVTKPEVKLGDYKNLAVSVEATKEVTDEEVDAKIEAARNNLAELVIKEGPATEGDTVVIDFVGSIDGVEFDGGKGENFSLGLGSGQFIPGFEAQLVGHAAGEEVNVEVTFPEDYQAADLAGKQALFVTKIHEVKAKEVPALDDELAKDIDEEVETLDELKAKYRKELEASKEVAFDDAVESAALELAVENAEIVELPEEMIHEEVHRAINEFLGGMQQQGISPDMYFQITGTTREDLHKQYEADAEKRTKTNLVVEAVAKAEGFEATEEEINKEIEDLAATYNMEVAQVRSLLSPEMLKHDIAVKKAVEVITSTATVK.

The 86-residue stretch at 163 to 248 (GDTVVIDFVG…IHEVKAKEVP (86 aa)) folds into the PPIase FKBP-type domain.

This sequence belongs to the FKBP-type PPIase family. Tig subfamily.

The protein localises to the cytoplasm. It catalyses the reaction [protein]-peptidylproline (omega=180) = [protein]-peptidylproline (omega=0). In terms of biological role, involved in protein export. Acts as a chaperone by maintaining the newly synthesized protein in an open conformation. Functions as a peptidyl-prolyl cis-trans isomerase. The chain is Trigger factor from Streptococcus suis (strain 98HAH33).